An 87-amino-acid polypeptide reads, in one-letter code: MAQALLNAGFGNFVAADRLIAIVSPDSAPIRRTVSEARERGQLVDVTCGRRTKAVLIADSGHVILSALQPETIAGRILNSRGDLSGA.

This sequence belongs to the RemA family.

This is Putative regulatory protein syc0519_c from Synechococcus sp. (strain ATCC 27144 / PCC 6301 / SAUG 1402/1) (Anacystis nidulans).